The sequence spans 324 residues: Tetrahydromethanopterin:alpha-L-glutamate ligase (324 aa).

Positions 113–321 constitute an ATP-grasp domain; sequence SYLLARAGLP…PAEYILEYLQ (209 aa). Residues lysine 148, 195–204, and arginine 220 each bind ATP; that span reads QEFIENPGRD. Residue aspartate 265 participates in Mg(2+) binding. Aspartate 265 contributes to the Mn(2+) binding site. Positions 274 to 293 are disordered; the sequence is TGNENKKTEDKSTGQGSRIL. The Mg(2+) site is built by glutamate 294 and asparagine 296. The Mn(2+) site is built by glutamate 294 and asparagine 296.

Belongs to the RimK family. MptN subfamily. In terms of assembly, homodimer. It depends on Mg(2+) as a cofactor. Mn(2+) serves as cofactor.

It carries out the reaction 5,6,7,8-tetrahydromethanopterin + L-glutamate + ATP = 5,6,7,8-tetrahydrosarcinapterin + ADP + phosphate + H(+). It functions in the pathway cofactor biosynthesis; 5,6,7,8-tetrahydrosarcinapterin biosynthesis. Functionally, catalyzes the ATP or GTP-dependent addition of one L-glutamate molecule to tetrahydromethanopterin, producing tetrahydrosarcinapterin. The protein is Tetrahydromethanopterin:alpha-L-glutamate ligase (mptN) of Methanosarcina acetivorans (strain ATCC 35395 / DSM 2834 / JCM 12185 / C2A).